We begin with the raw amino-acid sequence, 210 residues long: Na(+)-translocating NADH-quinone reductase subunit D (210 aa).

Helical transmembrane passes span 14–34, 42–62, 72–92, 103–123, 131–151, and 178–198; these read PIVNNNPIALQVLGVCSALAV, LVMALALTAVTAFSNLFISMI, IIVQMTIIASLVIVVDQLLQA, VFVGLIITNCIVMGRAEAYAM, FMDGIGNGLGYGAILLAVGFV, and NGLLLLPPSAFFLIGILIWII.

It belongs to the NqrDE/RnfAE family. Composed of six subunits; NqrA, NqrB, NqrC, NqrD, NqrE and NqrF.

The protein resides in the cell inner membrane. The enzyme catalyses a ubiquinone + n Na(+)(in) + NADH + H(+) = a ubiquinol + n Na(+)(out) + NAD(+). In terms of biological role, NQR complex catalyzes the reduction of ubiquinone-1 to ubiquinol by two successive reactions, coupled with the transport of Na(+) ions from the cytoplasm to the periplasm. NqrA to NqrE are probably involved in the second step, the conversion of ubisemiquinone to ubiquinol. This Shewanella sp. (strain ANA-3) protein is Na(+)-translocating NADH-quinone reductase subunit D.